Reading from the N-terminus, the 123-residue chain is UPF0231 protein PMI2039 (123 aa).

The protein belongs to the UPF0231 family.

This Proteus mirabilis (strain HI4320) protein is UPF0231 protein PMI2039.